Consider the following 659-residue polypeptide: Acetyl-coenzyme A synthetase (659 aa).

The disordered stretch occupies residues 1–35 (MATEQTKGQSSESISSVLSERRKFPPPEAFSSQSH). Residues 205 to 208 (RRGS), T323, and N347 each bind CoA. ATP contacts are provided by residues 399–401 (GEP), 423–428 (DTWWQT), D512, and R527. Position 535 (S535) interacts with CoA. ATP is bound at residue R538. Positions 549, 551, and 554 each coordinate Mg(2+). K621 carries the post-translational modification N6-acetyllysine.

Belongs to the ATP-dependent AMP-binding enzyme family. It depends on Mg(2+) as a cofactor. In terms of processing, acetylated. Deacetylation by the SIR2-homolog deacetylase activates the enzyme.

The catalysed reaction is acetate + ATP + CoA = acetyl-CoA + AMP + diphosphate. Functionally, catalyzes the conversion of acetate into acetyl-CoA (AcCoA), an essential intermediate at the junction of anabolic and catabolic pathways. AcsA undergoes a two-step reaction. In the first half reaction, AcsA combines acetate with ATP to form acetyl-adenylate (AcAMP) intermediate. In the second half reaction, it can then transfer the acetyl group from AcAMP to the sulfhydryl group of CoA, forming the product AcCoA. This Chlorobaculum tepidum (strain ATCC 49652 / DSM 12025 / NBRC 103806 / TLS) (Chlorobium tepidum) protein is Acetyl-coenzyme A synthetase.